Here is a 132-residue protein sequence, read N- to C-terminus: Actin-related protein 2/3 complex subunit 5A (132 aa).

An N-acetylalanine modification is found at Ala-2.

It belongs to the ARPC5 family. As to quaternary structure, component of the Arp2/3 complex composed of ARP2, ARP3, ARPC1/p41-ARC, ARPC2/p34-ARC, ARPC3/p21-ARC, ARPC4/p20-ARC and ARPC5/p16-ARC. As to expression, expressed at low levels in all tissues with a relatively highest expression in inflorescences.

The protein localises to the cytoplasm. Its subcellular location is the cytoskeleton. It is found in the cell projection. Functionally, functions as a component of the Arp2/3 complex which is involved in regulation of actin polymerization and together with an activating nucleation-promoting factor (NPF) mediates the formation of branched actin networks. Arp2/3 complex plays a critical role in the control of cell morphogenesis via the modulation of cell polarity development. This Arabidopsis thaliana (Mouse-ear cress) protein is Actin-related protein 2/3 complex subunit 5A (ARPC5A).